The following is a 98-amino-acid chain: Small ribosomal subunit protein uS17 (98 aa).

The protein belongs to the universal ribosomal protein uS17 family. In terms of assembly, part of the 30S ribosomal subunit.

In terms of biological role, one of the primary rRNA binding proteins, it binds specifically to the 5'-end of 16S ribosomal RNA. In Leptothrix cholodnii (strain ATCC 51168 / LMG 8142 / SP-6) (Leptothrix discophora (strain SP-6)), this protein is Small ribosomal subunit protein uS17.